The primary structure comprises 250 residues: S-adenosyl-L-methionine-dependent 2-deoxy-scyllo-inosamine dehydrogenase (250 aa).

[4Fe-4S] cluster-binding residues include C16, C20, C23, C169, C187, and E223.

Belongs to the radical SAM superfamily. The cofactor is [4Fe-4S] cluster.

It carries out the reaction 2-deoxy-scyllo-inosamine + S-adenosyl-L-methionine = 3-amino-2,3-dideoxy-scyllo-inosose + 5'-deoxyadenosine + L-methionine + H(+). Its pathway is antibiotic biosynthesis; butirosin biosynthesis. In terms of biological role, catalyzes the radical S-adenosyl-L-methionine (SAM)-dependent two-electron oxidation of 2-deoxy-scyllo-inosamine (DOIA) to amino-dideoxy-scyllo-inosose (amino-DOI) in the biosynthetic pathway of butirosin. This is S-adenosyl-L-methionine-dependent 2-deoxy-scyllo-inosamine dehydrogenase (btrN) from Niallia circulans (Bacillus circulans).